Reading from the N-terminus, the 95-residue chain is Protein K6 (95 aa).

The first 24 residues, 1–24 (MAPVHVLCCVSVLLATFYLTPTES), serve as a signal peptide directing secretion.

The sequence is that of Protein K6 (K6) from Human herpesvirus 8 type P (isolate GK18) (HHV-8).